The following is a 502-amino-acid chain: CDP-diacylglycerol--glycerol-3-phosphate 3-phosphatidyltransferase (502 aa).

58–65 provides a ligand contact to ATP; sequence STLYIGKE. PLD phosphodiesterase domains are found at residues 143-169 and 410-443; these read GWGL…SRDY and KGNT…TSRS. Catalysis depends on residues histidine 148, lysine 150, and aspartate 155.

The protein belongs to the CDP-alcohol phosphatidyltransferase class-II family.

The protein resides in the mitochondrion. It catalyses the reaction a CDP-1,2-diacyl-sn-glycerol + sn-glycerol 3-phosphate = a 1,2-diacyl-sn-glycero-3-phospho-(1'-sn-glycero-3'-phosphate) + CMP + H(+). The protein operates within phospholipid metabolism; phosphatidylglycerol biosynthesis; phosphatidylglycerol from CDP-diacylglycerol: step 1/2. Functionally, functions in the biosynthesis of the anionic phospholipids phosphatidylglycerol and cardiolipin. The chain is CDP-diacylglycerol--glycerol-3-phosphate 3-phosphatidyltransferase (pgs1) from Schizosaccharomyces pombe (strain 972 / ATCC 24843) (Fission yeast).